We begin with the raw amino-acid sequence, 147 residues long: Myoglobin (147 aa).

Residues 2-141 form the Globin domain; it reads ADFDMVLKCW…IIADMEADYK (140 aa). H60 is a binding site for nitrite. Residue H60 participates in O2 binding. H89 is a binding site for heme b.

The protein belongs to the globin family. Monomeric.

It is found in the cytoplasm. The protein localises to the sarcoplasm. It carries out the reaction Fe(III)-heme b-[protein] + nitric oxide + H2O = Fe(II)-heme b-[protein] + nitrite + 2 H(+). It catalyses the reaction H2O2 + AH2 = A + 2 H2O. Functionally, monomeric heme protein which primary function is to store oxygen and facilitate its diffusion within muscle tissues. Reversibly binds oxygen through a pentacoordinated heme iron and enables its timely and efficient release as needed during periods of heightened demand. Depending on the oxidative conditions of tissues and cells, and in addition to its ability to bind oxygen, it also has a nitrite reductase activity whereby it regulates the production of bioactive nitric oxide. Under stress conditions, like hypoxia and anoxia, it also protects cells against reactive oxygen species thanks to its pseudoperoxidase activity. In Notothenia neglecta (Yellowbelly rockcod), this protein is Myoglobin (mb).